A 430-amino-acid chain; its full sequence is MRSYEKSKTAFKEAQKLMPGGVNSPVRAFKSVDMDPIFMERGKGSKIFDIDGNEYIDYVLSWGPLILGHTNDRVVESLKKVAEYGTSFGAPTEVENELAKLVIDRVPSVEIVRMVSSGTEATMSALRLARGYTGRNKILKFEGCYHGHGDSLLIKAGSGVATLGLPDSPGVPEGIAKNTITVPYNDLESVKLAFQQFGEDIAGVIVEPVAGNMGVVPPQEGFLQGLRDITEQYGSLLIFDEVMTGFRVDYNCAQGYFGVTPDLTCLGKVIGGGLPVGAYGGKAEIMEQIAPSGPIYQAGTLSGNPLAMTAGLETLKQLTPESYKNFIKKGDRLEEGISKTAGAHGIPHTFNRAGSMIGFFFTNEPVINYETAKSSDLKLFASYYKGMANEGVFLPPSQFEGLFLSTAHTDEDIENTIQAAEKVFAEISRR.

N6-(pyridoxal phosphate)lysine is present on K268.

This sequence belongs to the class-III pyridoxal-phosphate-dependent aminotransferase family. HemL subfamily. In terms of assembly, homodimer. Requires pyridoxal 5'-phosphate as cofactor.

Its subcellular location is the cytoplasm. The catalysed reaction is (S)-4-amino-5-oxopentanoate = 5-aminolevulinate. It participates in porphyrin-containing compound metabolism; protoporphyrin-IX biosynthesis; 5-aminolevulinate from L-glutamyl-tRNA(Glu): step 2/2. The protein is Glutamate-1-semialdehyde 2,1-aminomutase (hemL) of Bacillus subtilis (strain 168).